The chain runs to 440 residues: Chromosome partition protein MukF (440 aa).

The segment at L208–I236 is leucine-zipper.

Belongs to the MukF family. As to quaternary structure, interacts, and probably forms a ternary complex, with MukE and MukB via its C-terminal region. The complex formation is stimulated by calcium or magnesium. It is required for an interaction between MukE and MukB.

It is found in the cytoplasm. The protein resides in the nucleoid. Involved in chromosome condensation, segregation and cell cycle progression. May participate in facilitating chromosome segregation by condensation DNA from both sides of a centrally located replisome during cell division. Not required for mini-F plasmid partitioning. Probably acts via its interaction with MukB and MukE. Overexpression results in anucleate cells. It has a calcium binding activity. The polypeptide is Chromosome partition protein MukF (Shigella boydii serotype 18 (strain CDC 3083-94 / BS512)).